The primary structure comprises 304 residues: D-alanine--D-alanine ligase (304 aa).

The ATP-grasp domain occupies 103-299; the sequence is KLIWQALGLP…FADLCIEILK (197 aa). Residue 129–184 participates in ATP binding; that stretch reads EEKLGLPMFVKPAAEGSSVGVVKVKGKGRLKSVYEELKHLQGEIIAERFIGGGEYS. Residues aspartate 253, glutamate 266, and asparagine 268 each contribute to the Mg(2+) site.

The protein belongs to the D-alanine--D-alanine ligase family. Requires Mg(2+) as cofactor. It depends on Mn(2+) as a cofactor.

The protein resides in the cytoplasm. The enzyme catalyses 2 D-alanine + ATP = D-alanyl-D-alanine + ADP + phosphate + H(+). It functions in the pathway cell wall biogenesis; peptidoglycan biosynthesis. Its function is as follows. Cell wall formation. In Neisseria meningitidis serogroup C / serotype 2a (strain ATCC 700532 / DSM 15464 / FAM18), this protein is D-alanine--D-alanine ligase.